The sequence spans 151 residues: Deoxyuridine 5'-triphosphate nucleotidohydrolase (151 aa).

Residues 70 to 72, N83, and 87 to 89 contribute to the substrate site; these read RSG and LID.

It belongs to the dUTPase family. Mg(2+) is required as a cofactor.

It carries out the reaction dUTP + H2O = dUMP + diphosphate + H(+). Its pathway is pyrimidine metabolism; dUMP biosynthesis; dUMP from dCTP (dUTP route): step 2/2. In terms of biological role, this enzyme is involved in nucleotide metabolism: it produces dUMP, the immediate precursor of thymidine nucleotides and it decreases the intracellular concentration of dUTP so that uracil cannot be incorporated into DNA. The sequence is that of Deoxyuridine 5'-triphosphate nucleotidohydrolase from Methylococcus capsulatus (strain ATCC 33009 / NCIMB 11132 / Bath).